A 408-amino-acid polypeptide reads, in one-letter code: 1-deoxy-D-xylulose 5-phosphate reductoisomerase (408 aa).

Residues Thr-27, Gly-28, Ser-29, Ile-30, Ala-53, Arg-54, Asn-55, and Asn-140 each contribute to the NADPH site. Lys-141 contacts 1-deoxy-D-xylulose 5-phosphate. Glu-142 serves as a coordination point for NADPH. Asp-166 contributes to the Mn(2+) binding site. Residues Ser-167, Glu-168, Ser-192, and His-215 each coordinate 1-deoxy-D-xylulose 5-phosphate. Mn(2+) is bound at residue Glu-168. Residue Gly-221 participates in NADPH binding. Residues Ser-228, Asn-233, Lys-234, and Glu-237 each coordinate 1-deoxy-D-xylulose 5-phosphate. Residue Glu-237 coordinates Mn(2+).

This sequence belongs to the DXR family. Mg(2+) is required as a cofactor. It depends on Mn(2+) as a cofactor.

The catalysed reaction is 2-C-methyl-D-erythritol 4-phosphate + NADP(+) = 1-deoxy-D-xylulose 5-phosphate + NADPH + H(+). The protein operates within isoprenoid biosynthesis; isopentenyl diphosphate biosynthesis via DXP pathway; isopentenyl diphosphate from 1-deoxy-D-xylulose 5-phosphate: step 1/6. Its function is as follows. Catalyzes the NADPH-dependent rearrangement and reduction of 1-deoxy-D-xylulose-5-phosphate (DXP) to 2-C-methyl-D-erythritol 4-phosphate (MEP). The polypeptide is 1-deoxy-D-xylulose 5-phosphate reductoisomerase (Nitratidesulfovibrio vulgaris (strain ATCC 29579 / DSM 644 / CCUG 34227 / NCIMB 8303 / VKM B-1760 / Hildenborough) (Desulfovibrio vulgaris)).